The chain runs to 330 residues: MKIKNILLTLCTSLLLTNVAAHAKEVKIGMAIDDLRLERWQKDRDIFVKKAESLGAKVFVQSANGNEETQMSQIENMINRGVDVLVIIPYNGQVLSNVVKEAKQEGIKVLAYDRMINDADIDFYISFDNEKVGELQAKALVDIVPQGNYFLMGGSPVDNNAKLFRAGQMKVLKPYVDSGKIKVVGDQWVDGWLPENALKIMENALTANNNKIDAVVASNDATAGGAIQALSAQGLSGKVAISGQDADLAGIKRIAAGTQTMTVYKPITLLANTAAEIAVELGNGQEPKADTTLNNGLKDVPSRLLTPIDVNKNNIKDTVIKDGFHKESEL.

The N-terminal stretch at 1 to 23 (MKIKNILLTLCTSLLLTNVAAHA) is a signal peptide.

Belongs to the bacterial solute-binding protein 2 family.

It localises to the periplasm. In terms of biological role, involved in the high-affinity D-xylose membrane transport system. Binds with high affinity to xylose. This Escherichia coli (strain K12) protein is D-xylose-binding periplasmic protein (xylF).